The following is a 318-amino-acid chain: Transaldolase (318 aa).

The active-site Schiff-base intermediate with substrate is the lysine 132.

Belongs to the transaldolase family. Type 1 subfamily. Homodimer.

It localises to the cytoplasm. It carries out the reaction D-sedoheptulose 7-phosphate + D-glyceraldehyde 3-phosphate = D-erythrose 4-phosphate + beta-D-fructose 6-phosphate. The protein operates within carbohydrate degradation; pentose phosphate pathway; D-glyceraldehyde 3-phosphate and beta-D-fructose 6-phosphate from D-ribose 5-phosphate and D-xylulose 5-phosphate (non-oxidative stage): step 2/3. In terms of biological role, transaldolase is important for the balance of metabolites in the pentose-phosphate pathway. This is Transaldolase from Shewanella sp. (strain MR-7).